Consider the following 266-residue polypeptide: uncharacterized protein (266 aa).

A helical transmembrane segment spans residues 13-33; sequence IIGLMLIIFAGILFYAYILQH.

It belongs to the LicD transferase family.

It is found in the membrane. This is an uncharacterized protein from Rickettsia prowazekii (strain Madrid E).